The sequence spans 180 residues: Regulator of G-protein signaling 8 (180 aa).

Position 26 is a phosphoserine (S26). In terms of domain architecture, RGS spans 56 to 171; that stretch reads SFDVLLSHKY…FLRSKMYLDL (116 aa).

Interacts with GNAO1 and GNAI3. As to expression, expressed at high levels in brain. Very little expression detected in other tissues. Detected in Purkinje cells in the cerebellum.

The protein resides in the cell membrane. Its subcellular location is the membrane. The protein localises to the perikaryon. It localises to the cell projection. It is found in the dendrite. The protein resides in the nucleus. Regulates G protein-coupled receptor signaling cascades, including signaling via muscarinic acetylcholine receptor CHRM2 and dopamine receptor DRD2. Inhibits signal transduction by increasing the GTPase activity of G protein alpha subunits, thereby driving them into their inactive GDP-bound form. Modulates the activity of potassium channels that are activated in response to DRD2 and CHRM2 signaling. The polypeptide is Regulator of G-protein signaling 8 (Rgs8) (Rattus norvegicus (Rat)).